Consider the following 280-residue polypeptide: Urease accessory protein UreD 1 (280 aa).

Belongs to the UreD family. As to quaternary structure, ureD, UreF and UreG form a complex that acts as a GTP-hydrolysis-dependent molecular chaperone, activating the urease apoprotein by helping to assemble the nickel containing metallocenter of UreC. The UreE protein probably delivers the nickel.

The protein localises to the cytoplasm. Functionally, required for maturation of urease via the functional incorporation of the urease nickel metallocenter. This is Urease accessory protein UreD 1 from Brucella abortus biovar 1 (strain 9-941).